Consider the following 264-residue polypeptide: MNQVTESAVQFDVVTLFPEMFRALTDWGITSRAVKQERFGLRTWNPRDFTTDNYRTVDDRPYGGGPGMVMLAKPLEAAINAAKAAQAELGVASTRVVMMSPQGAPFTHERAVRMAQEPGVIVLCGRYEAIDQRLLDRCVDEEISLGDFVLSGGELPAMAMMDAVVRLLPGVLNDAQSAVQDSFVDGLLDCPHYTRPEEYEGMRVPDVLLGGHHAEIERWRRQEALKNTLRKRPDLIVRARREKLLSRADEAWLANLAREAKNAS.

S-adenosyl-L-methionine contacts are provided by residues G125 and 145-150 (LGDFVL).

It belongs to the RNA methyltransferase TrmD family. Homodimer.

It localises to the cytoplasm. The enzyme catalyses guanosine(37) in tRNA + S-adenosyl-L-methionine = N(1)-methylguanosine(37) in tRNA + S-adenosyl-L-homocysteine + H(+). Its function is as follows. Specifically methylates guanosine-37 in various tRNAs. The sequence is that of tRNA (guanine-N(1)-)-methyltransferase from Burkholderia ambifaria (strain MC40-6).